Here is a 481-residue protein sequence, read N- to C-terminus: Phosphoglucosamine mutase (481 aa).

Ser128 acts as the Phosphoserine intermediate in catalysis. Residues Ser128, Asp269, Asp271, and Asp273 each coordinate Mg(2+). Ser128 is subject to Phosphoserine.

The protein belongs to the phosphohexose mutase family. Requires Mg(2+) as cofactor. Post-translationally, activated by phosphorylation.

The catalysed reaction is alpha-D-glucosamine 1-phosphate = D-glucosamine 6-phosphate. Functionally, catalyzes the conversion of glucosamine-6-phosphate to glucosamine-1-phosphate. This Synechocystis sp. (strain ATCC 27184 / PCC 6803 / Kazusa) protein is Phosphoglucosamine mutase.